Here is a 428-residue protein sequence, read N- to C-terminus: Serine--tRNA ligase (428 aa).

231–233 is an L-serine binding site; sequence TAE. Residue 262–264 coordinates ATP; sequence RSE. Glu-285 lines the L-serine pocket. Position 349-352 (349-352) interacts with ATP; that stretch reads EISS. Position 385 (Ser-385) interacts with L-serine.

It belongs to the class-II aminoacyl-tRNA synthetase family. Type-1 seryl-tRNA synthetase subfamily. As to quaternary structure, homodimer. The tRNA molecule binds across the dimer.

It is found in the cytoplasm. The enzyme catalyses tRNA(Ser) + L-serine + ATP = L-seryl-tRNA(Ser) + AMP + diphosphate + H(+). It catalyses the reaction tRNA(Sec) + L-serine + ATP = L-seryl-tRNA(Sec) + AMP + diphosphate + H(+). The protein operates within aminoacyl-tRNA biosynthesis; selenocysteinyl-tRNA(Sec) biosynthesis; L-seryl-tRNA(Sec) from L-serine and tRNA(Sec): step 1/1. Catalyzes the attachment of serine to tRNA(Ser). Is also able to aminoacylate tRNA(Sec) with serine, to form the misacylated tRNA L-seryl-tRNA(Sec), which will be further converted into selenocysteinyl-tRNA(Sec). The polypeptide is Serine--tRNA ligase (Staphylococcus aureus (strain bovine RF122 / ET3-1)).